The following is a 145-amino-acid chain: ATP synthase epsilon chain (145 aa).

Belongs to the ATPase epsilon chain family. F-type ATPases have 2 components, CF(1) - the catalytic core - and CF(0) - the membrane proton channel. CF(1) has five subunits: alpha(3), beta(3), gamma(1), delta(1), epsilon(1). CF(0) has three main subunits: a, b and c.

The protein resides in the cell inner membrane. Its function is as follows. Produces ATP from ADP in the presence of a proton gradient across the membrane. The protein is ATP synthase epsilon chain of Francisella tularensis subsp. tularensis (strain FSC 198).